Here is a 453-residue protein sequence, read N- to C-terminus: Bifunctional protein GlmU (453 aa).

Residues 1-226 (MKFSAVILAA…AIEVEGVNDR (226 aa)) are pyrophosphorylase. Residues 8–11 (LAAG), K22, Q73, 78–79 (GT), 100–102 (YGD), G137, E151, N166, and N224 each bind UDP-N-acetyl-alpha-D-glucosamine. Residue D102 participates in Mg(2+) binding. N224 lines the Mg(2+) pocket. Positions 227-247 (AQLARLERAFQSMQAQKLLEQ) are linker. Residues 248–453 (GVMLRDPARF…TGWQRPVKQK (206 aa)) form an N-acetyltransferase region. UDP-N-acetyl-alpha-D-glucosamine is bound by residues R330 and K348. The Proton acceptor role is filled by H360. Residues Y363 and N374 each contribute to the UDP-N-acetyl-alpha-D-glucosamine site. Acetyl-CoA-binding positions include A377, 383–384 (NY), S402, A420, and R437.

In the N-terminal section; belongs to the N-acetylglucosamine-1-phosphate uridyltransferase family. The protein in the C-terminal section; belongs to the transferase hexapeptide repeat family. In terms of assembly, homotrimer. Requires Mg(2+) as cofactor.

It localises to the cytoplasm. The catalysed reaction is alpha-D-glucosamine 1-phosphate + acetyl-CoA = N-acetyl-alpha-D-glucosamine 1-phosphate + CoA + H(+). It carries out the reaction N-acetyl-alpha-D-glucosamine 1-phosphate + UTP + H(+) = UDP-N-acetyl-alpha-D-glucosamine + diphosphate. The protein operates within nucleotide-sugar biosynthesis; UDP-N-acetyl-alpha-D-glucosamine biosynthesis; N-acetyl-alpha-D-glucosamine 1-phosphate from alpha-D-glucosamine 6-phosphate (route II): step 2/2. Its pathway is nucleotide-sugar biosynthesis; UDP-N-acetyl-alpha-D-glucosamine biosynthesis; UDP-N-acetyl-alpha-D-glucosamine from N-acetyl-alpha-D-glucosamine 1-phosphate: step 1/1. It functions in the pathway bacterial outer membrane biogenesis; LPS lipid A biosynthesis. Catalyzes the last two sequential reactions in the de novo biosynthetic pathway for UDP-N-acetylglucosamine (UDP-GlcNAc). The C-terminal domain catalyzes the transfer of acetyl group from acetyl coenzyme A to glucosamine-1-phosphate (GlcN-1-P) to produce N-acetylglucosamine-1-phosphate (GlcNAc-1-P), which is converted into UDP-GlcNAc by the transfer of uridine 5-monophosphate (from uridine 5-triphosphate), a reaction catalyzed by the N-terminal domain. In Vibrio campbellii (strain ATCC BAA-1116), this protein is Bifunctional protein GlmU.